The chain runs to 210 residues: MTKQKPVVIGVAGGSGSGKTSVTRSICQRFTETSILVIEQDYYYKDQSHLPFEERLNTNYDHPLAFDNDLLIEHLQQLMHNEPIEKPVYDYKIHTRSKDVIHVEPKEVIIVEGILILEDPRLVDLMDIKVYVDTDADLRIIRRLMRDIKERGRTLDSVIDQYIQNVRPSHLQFIEPTKRYADIIIPEGGQNHVAIDIMASKIEKILSRGL.

13 to 20 (GGSGSGKT) lines the ATP pocket.

The protein belongs to the uridine kinase family.

It localises to the cytoplasm. The enzyme catalyses uridine + ATP = UMP + ADP + H(+). It carries out the reaction cytidine + ATP = CMP + ADP + H(+). Its pathway is pyrimidine metabolism; CTP biosynthesis via salvage pathway; CTP from cytidine: step 1/3. It participates in pyrimidine metabolism; UMP biosynthesis via salvage pathway; UMP from uridine: step 1/1. This is Uridine kinase from Oceanobacillus iheyensis (strain DSM 14371 / CIP 107618 / JCM 11309 / KCTC 3954 / HTE831).